The following is a 461-amino-acid chain: Photosystem II CP43 reaction center protein (461 aa).

Residues 1-2 constitute a propeptide that is removed on maturation; the sequence is ME. Thr3 carries the post-translational modification N-acetylthreonine. Phosphothreonine is present on Thr3. 5 consecutive transmembrane segments (helical) span residues 57-81, 122-143, 166-188, 243-263, and 279-300; these read LFEVAHFVPEKPMYEQGLILLPHIA, LIGPETLEESFPFFGYIWKDKN, KAMYFGGVYDTWAAGGGDVRIIS, KPWGWARRAFVWSGEAYLSYS, and WFNNTAYPSEFYGPTGPEASQA. Glu355 contributes to the [CaMn4O5] cluster binding site. Residues 435-459 form a helical membrane-spanning segment; it reads RARAAAAGFEKGIDRDTEPVLSMKP.

The protein belongs to the PsbB/PsbC family. PsbC subfamily. In terms of assembly, PSII is composed of 1 copy each of membrane proteins PsbA, PsbB, PsbC, PsbD, PsbE, PsbF, PsbH, PsbI, PsbJ, PsbK, PsbL, PsbM, PsbT, PsbX, PsbY, PsbZ, Psb30/Ycf12, at least 3 peripheral proteins of the oxygen-evolving complex and a large number of cofactors. It forms dimeric complexes. Binds multiple chlorophylls and provides some of the ligands for the Ca-4Mn-5O cluster of the oxygen-evolving complex. It may also provide a ligand for a Cl- that is required for oxygen evolution. PSII binds additional chlorophylls, carotenoids and specific lipids. is required as a cofactor.

It is found in the plastid. The protein localises to the chloroplast thylakoid membrane. Its function is as follows. One of the components of the core complex of photosystem II (PSII). It binds chlorophyll and helps catalyze the primary light-induced photochemical processes of PSII. PSII is a light-driven water:plastoquinone oxidoreductase, using light energy to abstract electrons from H(2)O, generating O(2) and a proton gradient subsequently used for ATP formation. This is Photosystem II CP43 reaction center protein from Oltmannsiellopsis viridis (Marine flagellate).